Here is a 185-residue protein sequence, read N- to C-terminus: Ubiquitin-conjugating enzyme E2 5 (185 aa).

The 148-residue stretch at 1 to 148 folds into the UBC core domain; sequence MSSPSKRREM…VKEYCEKYAK (148 aa). The active-site Glycyl thioester intermediate is the Cys85. The interval 146-185 is disordered; the sequence is YAKPRADTEEMSSDDEMSEDEYASDGDDEDDVAIAGKLDP. Positions 154–177 are enriched in acidic residues; it reads EEMSSDDEMSEDEYASDGDDEDDV.

This sequence belongs to the ubiquitin-conjugating enzyme family. In terms of tissue distribution, expressed in developing ovules, but not in vascular tissues.

It carries out the reaction S-ubiquitinyl-[E1 ubiquitin-activating enzyme]-L-cysteine + [E2 ubiquitin-conjugating enzyme]-L-cysteine = [E1 ubiquitin-activating enzyme]-L-cysteine + S-ubiquitinyl-[E2 ubiquitin-conjugating enzyme]-L-cysteine.. It participates in protein modification; protein ubiquitination. Functionally, accepts the ubiquitin from the E1 complex and catalyzes its covalent attachment to other proteins. This Arabidopsis thaliana (Mouse-ear cress) protein is Ubiquitin-conjugating enzyme E2 5 (UBC5).